The chain runs to 239 residues: MAIQPPGSYPQGNKKGKAKKKSGQNAFARKEWYTLRSPSIFPNNINGKTLMTKSAGKNSYMNMIGRRYDVNQADLTGNNDVGHRKFIFKIGDIKGSECVGFFDGMELTSDKHKAMIKKWHTLIEAQKDIVAKDGSVFRVFVMGVTRRHPGYVKKTCYVKHSDEKKIRKIMFDVIEEELSGCDVQKIMKKLANETVGKRIEELGSEIFPLQNCCVRKVKTIKSHQTASVGQQEAIDAITN.

Positions 1-24 (MAIQPPGSYPQGNKKGKAKKKSGQ) are disordered.

Belongs to the eukaryotic ribosomal protein eS1 family. As to quaternary structure, component of the small ribosomal subunit. Mature ribosomes consist of a small (40S) and a large (60S) subunit. The 40S subunit contains about 33 different proteins and 1 molecule of RNA (18S). The 60S subunit contains about 49 different proteins and 3 molecules of RNA (25S, 5.8S and 5S).

It localises to the cytoplasm. The polypeptide is Small ribosomal subunit protein eS1 (Encephalitozoon cuniculi (strain GB-M1) (Microsporidian parasite)).